The sequence spans 108 residues: Large ribosomal subunit protein uL23 (108 aa).

The protein belongs to the universal ribosomal protein uL23 family. Part of the 50S ribosomal subunit. Contacts protein L29, and trigger factor when it is bound to the ribosome.

In terms of biological role, one of the early assembly proteins it binds 23S rRNA. One of the proteins that surrounds the polypeptide exit tunnel on the outside of the ribosome. Forms the main docking site for trigger factor binding to the ribosome. This is Large ribosomal subunit protein uL23 from Mycoplasmoides gallisepticum (strain R(low / passage 15 / clone 2)) (Mycoplasma gallisepticum).